The following is a 164-amino-acid chain: Phosphopantetheine adenylyltransferase (164 aa).

S10 is a binding site for substrate. Residues 10-11 (SF) and H18 each bind ATP. Substrate-binding residues include K42, L74, and R88. ATP-binding positions include 89–91 (GLR), E99, and 124–130 (YSFLSSS).

The protein belongs to the bacterial CoaD family. As to quaternary structure, homohexamer. Mg(2+) serves as cofactor.

The protein resides in the cytoplasm. It carries out the reaction (R)-4'-phosphopantetheine + ATP + H(+) = 3'-dephospho-CoA + diphosphate. The protein operates within cofactor biosynthesis; coenzyme A biosynthesis; CoA from (R)-pantothenate: step 4/5. Functionally, reversibly transfers an adenylyl group from ATP to 4'-phosphopantetheine, yielding dephospho-CoA (dPCoA) and pyrophosphate. This is Phosphopantetheine adenylyltransferase from Exiguobacterium sibiricum (strain DSM 17290 / CCUG 55495 / CIP 109462 / JCM 13490 / 255-15).